The primary structure comprises 209 residues: Protein GrpE (209 aa).

2 stretches are compositionally biased toward basic and acidic residues: residues 1-16 and 34-44; these read MKKSTKKESTHSKEES and KAGEKTAEPEK. The segment at 1 to 61 is disordered; it reads MKKSTKKEST…EKSPEAACRE (61 aa).

It belongs to the GrpE family. In terms of assembly, homodimer.

It localises to the cytoplasm. Participates actively in the response to hyperosmotic and heat shock by preventing the aggregation of stress-denatured proteins, in association with DnaK and GrpE. It is the nucleotide exchange factor for DnaK and may function as a thermosensor. Unfolded proteins bind initially to DnaJ; upon interaction with the DnaJ-bound protein, DnaK hydrolyzes its bound ATP, resulting in the formation of a stable complex. GrpE releases ADP from DnaK; ATP binding to DnaK triggers the release of the substrate protein, thus completing the reaction cycle. Several rounds of ATP-dependent interactions between DnaJ, DnaK and GrpE are required for fully efficient folding. The protein is Protein GrpE of Methanosarcina acetivorans (strain ATCC 35395 / DSM 2834 / JCM 12185 / C2A).